We begin with the raw amino-acid sequence, 238 residues long: Purine nucleoside phosphorylase DeoD-type (238 aa).

His-4 lines the a purine D-ribonucleoside pocket. Phosphate contacts are provided by residues Gly-20, Arg-24, Arg-43, and 87-90; that span reads RVGT. A purine D-ribonucleoside-binding positions include 179 to 181 and 203 to 204; these read EME and SN.

The protein belongs to the PNP/UDP phosphorylase family. Homohexamer; trimer of homodimers.

The enzyme catalyses a purine D-ribonucleoside + phosphate = a purine nucleobase + alpha-D-ribose 1-phosphate. It catalyses the reaction a purine 2'-deoxy-D-ribonucleoside + phosphate = a purine nucleobase + 2-deoxy-alpha-D-ribose 1-phosphate. Its function is as follows. Catalyzes the reversible phosphorolytic breakdown of the N-glycosidic bond in the beta-(deoxy)ribonucleoside molecules, with the formation of the corresponding free purine bases and pentose-1-phosphate. The chain is Purine nucleoside phosphorylase DeoD-type from Lacticaseibacillus casei (strain BL23) (Lactobacillus casei).